An 88-amino-acid chain; its full sequence is Small ribosomal subunit protein bS20 (88 aa).

Positions 1 to 17 (MANIKSNEKRLRQDIKR) are enriched in basic and acidic residues. The tract at residues 1–25 (MANIKSNEKRLRQDIKRNLNNKGQK) is disordered.

The protein belongs to the bacterial ribosomal protein bS20 family.

Functionally, binds directly to 16S ribosomal RNA. This chain is Small ribosomal subunit protein bS20, found in Mycoplasma genitalium (strain ATCC 33530 / DSM 19775 / NCTC 10195 / G37) (Mycoplasmoides genitalium).